The sequence spans 492 residues: Katanin p60 ATPase-containing subunit A1 (492 aa).

A disordered region spans residues 91–158 (PAHDGEVWSL…MKPVRAREKK (68 aa)). Over residues 138–147 (LPSSKNTNNV) the composition is skewed to polar residues. An ATP-binding site is contributed by 250–257 (GPPGTGKT).

The protein belongs to the AAA ATPase family. Katanin p60 subunit A1 subfamily. Can homooligomerize into hexameric rings, which may be promoted by interaction with microtubules. Interacts with katnb1, which may serve as a targeting subunit.

The protein resides in the cytoplasm. It localises to the cytoskeleton. Its subcellular location is the microtubule organizing center. It is found in the centrosome. The protein localises to the spindle pole. The protein resides in the spindle. It carries out the reaction n ATP + n H2O + a microtubule = n ADP + n phosphate + (n+1) alpha/beta tubulin heterodimers.. Its activity is regulated as follows. ATPase activity is stimulated by microtubules, which promote homooligomerization. ATP-dependent microtubule severing is stimulated by interaction with katnb1. Its function is as follows. Catalytic subunit of a complex which severs microtubules in an ATP-dependent manner. Microtubule severing may promote rapid reorganization of cellular microtubule arrays and the release of microtubules from the centrosome following nucleation. In Xenopus tropicalis (Western clawed frog), this protein is Katanin p60 ATPase-containing subunit A1 (katna1).